The primary structure comprises 58 residues: Large ribosomal subunit protein eL37 (58 aa).

Zn(2+)-binding residues include Cys-20, Cys-23, Cys-35, and Cys-38. Residues 20-38 (CRRCGEKSYHVKKERCSSC) form a C4-type zinc finger. The segment at 39-58 (GFGDSASRRGYAWQSKSGDN) is disordered.

The protein belongs to the eukaryotic ribosomal protein eL37 family. It depends on Zn(2+) as a cofactor.

Functionally, binds to the 23S rRNA. This Halorubrum lacusprofundi (strain ATCC 49239 / DSM 5036 / JCM 8891 / ACAM 34) protein is Large ribosomal subunit protein eL37.